A 168-amino-acid chain; its full sequence is 2-C-methyl-D-erythritol 2,4-cyclodiphosphate synthase (168 aa).

Residues D11 and H13 each coordinate a divalent metal cation. 4-CDP-2-C-methyl-D-erythritol 2-phosphate-binding positions include 11–13 and 41–42; these read DVH and HS. H49 lines the a divalent metal cation pocket. Residues 63–65, 68–72, 139–142, F146, and R149 contribute to the 4-CDP-2-C-methyl-D-erythritol 2-phosphate site; these read DIG, FPDTD, and TTTE.

This sequence belongs to the IspF family. As to quaternary structure, homotrimer. Requires a divalent metal cation as cofactor.

It carries out the reaction 4-CDP-2-C-methyl-D-erythritol 2-phosphate = 2-C-methyl-D-erythritol 2,4-cyclic diphosphate + CMP. It functions in the pathway isoprenoid biosynthesis; isopentenyl diphosphate biosynthesis via DXP pathway; isopentenyl diphosphate from 1-deoxy-D-xylulose 5-phosphate: step 4/6. In terms of biological role, involved in the biosynthesis of isopentenyl diphosphate (IPP) and dimethylallyl diphosphate (DMAPP), two major building blocks of isoprenoid compounds. Catalyzes the conversion of 4-diphosphocytidyl-2-C-methyl-D-erythritol 2-phosphate (CDP-ME2P) to 2-C-methyl-D-erythritol 2,4-cyclodiphosphate (ME-CPP) with a corresponding release of cytidine 5-monophosphate (CMP). The polypeptide is 2-C-methyl-D-erythritol 2,4-cyclodiphosphate synthase (Psychrobacter arcticus (strain DSM 17307 / VKM B-2377 / 273-4)).